Consider the following 136-residue polypeptide: NADPH-dependent 7-cyano-7-deazaguanine reductase (136 aa).

Residue Cys53 is the Thioimide intermediate of the active site. Catalysis depends on Asp60, which acts as the Proton donor. Substrate-binding positions include Val75 to Leu77 and His94 to Glu95.

It belongs to the GTP cyclohydrolase I family. QueF type 1 subfamily.

The protein resides in the cytoplasm. It catalyses the reaction 7-aminomethyl-7-carbaguanine + 2 NADP(+) = 7-cyano-7-deazaguanine + 2 NADPH + 3 H(+). It functions in the pathway tRNA modification; tRNA-queuosine biosynthesis. Catalyzes the NADPH-dependent reduction of 7-cyano-7-deazaguanine (preQ0) to 7-aminomethyl-7-deazaguanine (preQ1). This Nostoc sp. (strain PCC 7120 / SAG 25.82 / UTEX 2576) protein is NADPH-dependent 7-cyano-7-deazaguanine reductase.